Consider the following 431-residue polypeptide: Reticulon-like protein B17 (431 aa).

Disordered regions lie at residues 1 to 110 and 126 to 152; these read MEST…SEAV and PPRKRKTNGRPKKDKQSSAPPLCSSSD. Polar residues predominate over residues 12–26; sequence TKSASRLQDSSNPPN. Over residues 126-138 the composition is skewed to basic residues; that stretch reads PPRKRKTNGRPKK. The span at 142-152 shows a compositional bias: polar residues; the sequence is SSAPPLCSSSD. In terms of domain architecture, Reticulon spans 168–355; sequence ISDLVMWRDV…VTAFWNLTSI (188 aa). The next 4 helical transmembrane spans lie at 177–197, 202–222, 286–306, and 349–369; these read VAKSTLWFGFGCLSFLSSCFA, FSVFSAVSNLGLVLLCGSFLS, YGHLITLWRLSAFGFFLSFTI, and FWNLTSIRTRIFAVFIILVIF. Over residues 382–415 the composition is skewed to acidic residues; it reads EVEPVENEQEEETLPQEEETVPQEEETVPQEEEQ. Positions 382–422 are disordered; the sequence is EVEPVENEQEEETLPQEEETVPQEEETVPQEEEQTQPSEER.

The protein localises to the endoplasmic reticulum membrane. This Arabidopsis thaliana (Mouse-ear cress) protein is Reticulon-like protein B17 (RTNLB17).